The following is a 200-amino-acid chain: Recombination protein RecR (200 aa).

Residues 59 to 74 (CEKCNTFTEAQICEVC) form a C4-type zinc finger. Residues 82–177 (ALLCVVETPA…AVTRLARGVP (96 aa)) form the Toprim domain.

It belongs to the RecR family.

Its function is as follows. May play a role in DNA repair. It seems to be involved in an RecBC-independent recombinational process of DNA repair. It may act with RecF and RecO. The protein is Recombination protein RecR of Burkholderia mallei (strain NCTC 10247).